The following is a 514-amino-acid chain: uncharacterized protein (514 aa).

The protein to E.coli YjjI.

This is an uncharacterized protein from Haemophilus influenzae (strain ATCC 51907 / DSM 11121 / KW20 / Rd).